A 175-amino-acid chain; its full sequence is Shikimate kinase (175 aa).

16 to 21 contacts ATP; it reads GAGKST. Ser20 is a binding site for Mg(2+). Positions 38, 62, and 84 each coordinate substrate. Arg122 lines the ATP pocket. Substrate is bound at residue Arg141.

This sequence belongs to the shikimate kinase family. Monomer. Mg(2+) serves as cofactor.

The protein localises to the cytoplasm. The enzyme catalyses shikimate + ATP = 3-phosphoshikimate + ADP + H(+). It functions in the pathway metabolic intermediate biosynthesis; chorismate biosynthesis; chorismate from D-erythrose 4-phosphate and phosphoenolpyruvate: step 5/7. Catalyzes the specific phosphorylation of the 3-hydroxyl group of shikimic acid using ATP as a cosubstrate. In Legionella pneumophila (strain Paris), this protein is Shikimate kinase.